Here is a 192-residue protein sequence, read N- to C-terminus: MQADTPKGCFVAVVGPSGAGKDTIMDAARVALSGDMRFHFVRRIITRTQMPGTEDHDSLDEADFARAAGEGRFALHWQAHGLRYGLPKTLDDEIAGGAVVIANVSRRVLSDIRRLYTSRSVVVISARTEVLAQRLASRGRESREEIAARLAREVGFDDGSGDVVTIDNSGEVGASTKAFLYHLHEIAVKTIA.

Residue 15-22 (GPSGAGKD) coordinates ATP.

This sequence belongs to the ribose 1,5-bisphosphokinase family.

It catalyses the reaction alpha-D-ribose 1,5-bisphosphate + ATP = 5-phospho-alpha-D-ribose 1-diphosphate + ADP. The protein operates within metabolic intermediate biosynthesis; 5-phospho-alpha-D-ribose 1-diphosphate biosynthesis; 5-phospho-alpha-D-ribose 1-diphosphate from D-ribose 5-phosphate (route II): step 3/3. Catalyzes the phosphorylation of ribose 1,5-bisphosphate to 5-phospho-D-ribosyl alpha-1-diphosphate (PRPP). This chain is Ribose 1,5-bisphosphate phosphokinase PhnN, found in Brucella abortus biovar 1 (strain 9-941).